A 335-amino-acid polypeptide reads, in one-letter code: Beta-1,4-mannooligosaccharide phosphorylase (335 aa).

It belongs to the glycosyl hydrolase 130 family. In terms of assembly, homohexamer in solution.

It catalyses the reaction [(1-&gt;4)-beta-D-mannosyl](n) + phosphate = [(1-&gt;4)-beta-D-mannosyl](n-1) + alpha-D-mannose 1-phosphate. Catalyzes the phosphorolysis of beta-1,4-mannooligosaccharides to mannose 1-phosphate (Man1P) and shorter mannooligosaccharides. Can also catalyze the phosphorolysis of 4-O-beta-D-mannopyranosyl-D-glucopyranose (Man-Glc), but shows higher activity toward longer mannooligosaccharides. Involved in a mannan catabolic pathway which feeds into glycolysis. The protein is Beta-1,4-mannooligosaccharide phosphorylase of Ruminococcus albus (strain ATCC 27210 / DSM 20455 / JCM 14654 / NCDO 2250 / 7).